The following is a 285-amino-acid chain: 1,4-dihydroxy-2-naphthoyl-CoA synthase (285 aa).

Residues R45, 84 to 88 (AGGDQ), Y97, 129 to 133 (YSIGG), T155, S161, Y258, and K273 each bind substrate. Position 154–156 (154–156 (QTG)) interacts with hydrogencarbonate.

The protein belongs to the enoyl-CoA hydratase/isomerase family. MenB subfamily. Homohexamer. Hydrogencarbonate is required as a cofactor.

The catalysed reaction is 2-succinylbenzoyl-CoA + H(+) = 1,4-dihydroxy-2-naphthoyl-CoA + H2O. It functions in the pathway quinol/quinone metabolism; 1,4-dihydroxy-2-naphthoate biosynthesis; 1,4-dihydroxy-2-naphthoate from chorismate: step 6/7. The protein operates within quinol/quinone metabolism; menaquinone biosynthesis. In terms of biological role, converts o-succinylbenzoyl-CoA (OSB-CoA) to 1,4-dihydroxy-2-naphthoyl-CoA (DHNA-CoA). The polypeptide is 1,4-dihydroxy-2-naphthoyl-CoA synthase (Salmonella typhimurium (strain LT2 / SGSC1412 / ATCC 700720)).